Here is a 690-residue protein sequence, read N- to C-terminus: Cysteine-rich receptor-like protein kinase 21 (690 aa).

The signal sequence occupies residues 1–24 (MQKNKMVDLRAIFWFVVISSCAVA). Residues 25 to 129 (APTCIQRSDF…CLVRYSNHLI (105 aa)) enclose the Gnk2-homologous 1 domain. Over 25-281 (APTCIQRSDF…KDGKNISTGS (257 aa)) the chain is Extracellular. Residues Asn-130, Asn-148, Asn-155, Asn-220, Asn-268, and Asn-276 are each glycosylated (N-linked (GlcNAc...) asparagine). In terms of domain architecture, Gnk2-homologous 2 spans 140 to 246 (AEYIEYKYNT…CFMRWDLQPF (107 aa)). The chain crosses the membrane as a helical span at residues 282-302 (IVAIAVVSVVVSTVLLALGYA). The Cytoplasmic segment spans residues 303–690 (VSRRRKAYQS…DASITSVRPR (388 aa)). The region spanning 363 to 640 (FHKSNKLGHG…IFRMLTNVSI (278 aa)) is the Protein kinase domain. ATP contacts are provided by residues 369 to 377 (LGHGGFGAV) and Lys-391. Residue Tyr-436 is modified to Phosphotyrosine. Asp-488 acts as the Proton acceptor in catalysis. Phosphoserine is present on Ser-492. Thr-528 bears the Phosphothreonine mark. A Phosphotyrosine modification is found at Tyr-536.

This sequence belongs to the protein kinase superfamily. Ser/Thr protein kinase family. CRK subfamily.

The protein resides in the membrane. It catalyses the reaction L-seryl-[protein] + ATP = O-phospho-L-seryl-[protein] + ADP + H(+). The catalysed reaction is L-threonyl-[protein] + ATP = O-phospho-L-threonyl-[protein] + ADP + H(+). The sequence is that of Cysteine-rich receptor-like protein kinase 21 (CRK21) from Arabidopsis thaliana (Mouse-ear cress).